Consider the following 261-residue polypeptide: Chanoclavine-I dehydrogenase easD (261 aa).

NADP(+) contacts are provided by isoleucine 18, lysine 48, aspartate 66, arginine 132, tyrosine 166, lysine 170, and threonine 201. The active-site Proton donor is the tyrosine 166. Catalysis depends on lysine 170, which acts as the Lowers pKa of active site Tyr.

The protein belongs to the short-chain dehydrogenases/reductases (SDR) family.

It catalyses the reaction chanoclavine-I + NAD(+) = chanoclavine-I aldehyde + NADH + H(+). Its pathway is alkaloid biosynthesis; ergot alkaloid biosynthesis. Functionally, chanoclavine-I dehydrogenase; part of the gene cluster that mediates the biosynthesis of fumiclavanine C, a fungal ergot alkaloid. DmaW catalyzes the first step of ergot alkaloid biosynthesis by condensing dimethylallyl diphosphate (DMAP) and tryptophan to form 4-dimethylallyl-L-tryptophan. The second step is catalyzed by the methyltransferase easF that methylates 4-dimethylallyl-L-tryptophan in the presence of S-adenosyl-L-methionine, resulting in the formation of 4-dimethylallyl-L-abrine. The catalase easC and the FAD-dependent oxidoreductase easE then transform 4-dimethylallyl-L-abrine to chanoclavine-I which is further oxidized by EasD in the presence of NAD(+), resulting in the formation of chanoclavine-I aldehyde. EasA reduces chanoclavine-I aldehyde to dihydrochanoclavine-I aldehyde that spontaneously dehydrates to form 6,8-dimethyl-6,7-didehydroergoline. EasG then catalyzes the reduction of 6,8-dimethyl-6,7-didehydroergoline to form festuclavine. Hydrolysis of festuclavine by easM then leads to the formation of fumigaclavine B which is in turn acetylated by easN to fumigaclavine A. Finally, easL catalyzes the conversion of fumigaclavine A into fumigaclavine C by attaching a dimethylallyl moiety to C-2 of the indole nucleus. This is Chanoclavine-I dehydrogenase easD from Aspergillus fumigatus (strain ATCC MYA-4609 / CBS 101355 / FGSC A1100 / Af293) (Neosartorya fumigata).